The sequence spans 248 residues: 14-3-3-like protein G-BOX factor 14 lambda (248 aa).

S70, S112, and S193 each carry phosphoserine; by CRPK1. T214 carries the phosphothreonine; by CRPK1 modification.

It belongs to the 14-3-3 family. As to quaternary structure, interacts with SERK1 in the cell membrane. Component of the SERK1 signaling complex, composed of KAPP, CDC48A, GRF6 or GRF7, SERK1, SERK2, SERK3/BAK1 and BRI1. Interacts with TPK1. Interacts with ADF1. Binds to CRPK1 at the plasma membrane. Interacts with DREB1A and DREB1B in the nucleus when activated by CRPK1-mediated phosphorylation upon freezing. Interacts with CINV1. Binds to the N-terminal region of B1L. Post-translationally, transphosphorylated by SERK1. Phosphorylated by CRPK1 in response to cold.

It localises to the nucleus. Its subcellular location is the cell membrane. It is found in the cytoplasm. Functionally, is associated with a DNA binding complex that binds to the G box, a well-characterized cis-acting DNA regulatory element found in plant genes. Specific negative regulator of slow-vacuolar (SV) ion channel. Mediates F-actin dynamics possibly through inhibiting ADF1 phosphorylation. Negative regulator of freezing tolerance that modulates cold-responsive C-repeat-binding factors (CBF) DREB1A and DREB1B proteins stability by facilitating their ubiquitin-mediated degradation when activated by CRPK1-mediated phosphorylation in freezing conditions; this processus is counteracted by B1L. The sequence is that of 14-3-3-like protein G-BOX factor 14 lambda from Arabidopsis thaliana (Mouse-ear cress).